Consider the following 85-residue polypeptide: Large ribosomal subunit protein bL27 (85 aa).

The segment at 1–26 is disordered; the sequence is MAHKKAGGSTRNGRDSESKRLGVKRF.

It belongs to the bacterial ribosomal protein bL27 family.

The chain is Large ribosomal subunit protein bL27 from Saccharophagus degradans (strain 2-40 / ATCC 43961 / DSM 17024).